Reading from the N-terminus, the 273-residue chain is Undecaprenyl-diphosphatase (273 aa).

Transmembrane regions (helical) follow at residues 3 to 23 (IIELIKALILGLVEGATEFAP), 48 to 68 (GANTFKVVIQLGSVLAAVVVF), 89 to 109 (LTLMHIFVGLLPAGVLGVLFE), 116 to 136 (LFSTKTVLIGLVLGALLMIAA), 151 to 171 (ITYKQAFIVGLVQCLSLWPGF), 192 to 212 (ADFTFIMAVPIMAGASAISLL), 225 to 245 (FFVVGFISAFVFALLAIRFFL), and 253 to 273 (LVPFAIYRIVLAAVIYVVYFA).

The protein belongs to the UppP family.

The protein resides in the cell membrane. It carries out the reaction di-trans,octa-cis-undecaprenyl diphosphate + H2O = di-trans,octa-cis-undecaprenyl phosphate + phosphate + H(+). Its function is as follows. Catalyzes the dephosphorylation of undecaprenyl diphosphate (UPP). Confers resistance to bacitracin. This chain is Undecaprenyl-diphosphatase, found in Anoxybacillus flavithermus (strain DSM 21510 / WK1).